The primary structure comprises 225 residues: Type II restriction enzyme BslI subunit alpha (225 aa).

2 C4-type zinc fingers span residues 36 to 53 (CKDCGQYWHTSLSECYFC) and 63 to 84 (CNSCGKKYSLTSSSKSCDTDGC).

In terms of assembly, heterotetramer of two alpha and two beta subunits. The alpha subunit is believed to be responsible for DNA recognition, while the beta subunit is thought to mediate cleavage. The cofactor is Zn(2+).

The enzyme catalyses Endonucleolytic cleavage of DNA to give specific double-stranded fragments with terminal 5'-phosphates.. A P subtype restriction enzyme that recognizes the double-stranded sequence 5'-CCN(7)GG-3' and cleaves after N-7. The polypeptide is Type II restriction enzyme BslI subunit alpha (Bacillus sp. (strain NEB-606)).